A 396-amino-acid polypeptide reads, in one-letter code: Acetyl-CoA acetyltransferase ERG10, cytosolic (396 aa).

The active-site Acyl-thioester intermediate is Cys-91. Tyr-186 serves as a coordination point for K(+). Positions 227 and 230 each coordinate CoA. K(+) contacts are provided by Ala-246, Pro-247, and Val-347. Catalysis depends on proton acceptor residues His-351 and Cys-381. A chloride-binding site is contributed by Asn-382.

The protein belongs to the thiolase-like superfamily. Thiolase family. Homotetramer. The cofactor is K(+).

It localises to the cytoplasm. The protein localises to the cytosol. The enzyme catalyses 2 acetyl-CoA = acetoacetyl-CoA + CoA. It functions in the pathway metabolic intermediate biosynthesis; (R)-mevalonate biosynthesis; (R)-mevalonate from acetyl-CoA: step 1/3. Its function is as follows. Acetyl-CoA acetyltransferase; part of the first module of ergosterol biosynthesis pathway that includes the early steps of the pathway, conserved across all eukaryotes, and which results in the formation of mevalonate from acetyl-coenzyme A (acetyl-CoA). ERG10B catalyzes the formation of acetoacetyl-CoA from acetyl-CoA. The first module starts with the action of the cytosolic acetyl-CoA acetyltransferase ERG10B that catalyzes the formation of acetoacetyl-CoA. The hydroxymethylglutaryl-CoA synthases ERG13 then condenses acetyl-CoA with acetoacetyl-CoA to form HMG-CoA. The rate-limiting step of the early module is the reduction to mevalonate by the 3-hydroxy-3-methylglutaryl-coenzyme A (HMG-CoA) reductases HMG1. The polypeptide is Acetyl-CoA acetyltransferase ERG10, cytosolic (Gibberella zeae (strain ATCC MYA-4620 / CBS 123657 / FGSC 9075 / NRRL 31084 / PH-1) (Wheat head blight fungus)).